The sequence spans 963 residues: uncharacterized protein (963 aa).

Coiled coils occupy residues 176–236 and 373–467; these read NGRN…HIRM and DYEW…KKTV. The chain crosses the membrane as a helical span at residues 468–488; sequence IAAGMLFIVLFSLLQQWIPAI. 2 coiled-coil regions span residues 536-570 and 647-789; these read RNKQHLLTQRAALQQKEAAYERVIQQFEQWEAEMA and ALHT…LEAS.

Its subcellular location is the cell membrane. This is an uncharacterized protein from Bacillus subtilis (strain 168).